A 204-amino-acid polypeptide reads, in one-letter code: MPPMTRKTRIQPIEPVAEEDDNGYDRPSKSQLKREMHELQVLGQALVDLPKDALKRMPMPESLGDAVREARRITDHEGKRRQLQYVGRVMRSLTDDETAALRTALDAQRGVNKAATARLHWIERTREQLLASDDALTEFLRQHPDADIQEGRTLIRNARKEAQQGKPPRYFRELFQWIKAAGGASDSDDEAADDAGDDHDDDEA.

Disordered stretches follow at residues 1 to 31 (MPPM…SKSQ) and 182 to 204 (GGAS…DDEA). The span at 186–204 (DSDDEAADDAGDDHDDDEA) shows a compositional bias: acidic residues.

The protein belongs to the DarP family.

Its subcellular location is the cytoplasm. Member of a network of 50S ribosomal subunit biogenesis factors which assembles along the 30S-50S interface, preventing incorrect 23S rRNA structures from forming. Promotes peptidyl transferase center (PTC) maturation. The sequence is that of Dual-action ribosomal maturation protein DarP from Burkholderia orbicola (strain MC0-3).